Reading from the N-terminus, the 3072-residue chain is Platelet binding protein GspB (3072 aa).

An N-terminal signal peptide occupies residues methionine 1–serine 85. Disordered stretches follow at residues glutamate 117 to serine 147, serine 182 to valine 254, serine 876 to alanine 909, serine 936 to alanine 969, serine 1024 to alanine 2085, serine 2106 to alanine 2139, valine 2173 to alanine 2223, serine 2250 to alanine 2595, threonine 2625 to valine 2965, and serine 3014 to glutamate 3045. A compositionally biased stretch (polar residues) spans alanine 118–alanine 127. Positions serine 123 to serine 236 are ser-rich region 1 (SSR1). Composition is skewed to low complexity over residues glutamate 131–serine 147 and serine 182–threonine 238. The interval glutamine 237 to glycine 603 is basic region (BR). The ser-rich region 2 (SSR2) stretch occupies residues serine 604–serine 3028. Low complexity predominate over residues serine 3014–serine 3028. Residues leucine 3038–glycine 3042 carry the LPXTG sorting signal motif. Pentaglycyl murein peptidoglycan amidated threonine is present on threonine 3041. Positions glycine 3042–aspartate 3072 are cleaved as a propeptide — removed by sortase.

The protein belongs to the serine-rich repeat protein (SRRP) family. Both SSR domains in the unglycosylated protein bind to Asp2 and Asp3; glycosylated protein binds less well. Interacts with the human cell surface glycoprotein GP1BA. Proteolytically cleaved by a metalloprotease. Post-translationally, both SSR1 and SSR2 domains are glycosylated. A truncated derivative (residues 1-2062) contains 105 nmol per nmol of protein, suggesting at least 10% of the apparent molecular weight is due to carbohydrates. Glucose and N-acetylglucosamine are present in a ratio of 30:73 residues per truncated polypeptide, as well as minor amounts of galactose and N-acetylgalactosamine. Glycosylation occurs intracellularly in the Ser-rich regions SSR1 and SSR2. Glycosylation of SSR2 domain may be required to prevent aggregation of GspB. It is probable that most of the Ser residues in SSR1 and SSR2 are O-GlcNAcylated. Sequential glycosylation by sugar transferases are able to generate complex sugar polymorphisms.

Its subcellular location is the secreted. It is found in the cell wall. Functionally, plays a role in virulence and host-pathogen interactions. Mediates binding to human platelets via interaction with the human cell surface glycoprotein GP1BA. Plays a positive role in biofilm formation, possibly by self-association via the basic region (BR). In Streptococcus gordonii, this protein is Platelet binding protein GspB (gspB).